A 658-amino-acid chain; its full sequence is Putative phospholipase B-like lamina ancestor (658 aa).

The signal sequence occupies residues 1–29 (MLKVVGASWQKTRIGTYILIGAGLLVIGA). Asn229, Asn465, and Asn486 each carry an N-linked (GlcNAc...) asparagine glycan.

Belongs to the phospholipase B-like family. As to expression, expressed in neural and glial progenitors prior to, but not after, differentiation. Not expressed in late third instar disks, but is expressed uniformly by early third instar disks, in the imaginal ring of the proventriculus and in the salivary gland.

It is found in the secreted. Functionally, putative phospholipase. Involved in the regulation of cellular plasticity in imaginal disks. The polypeptide is Putative phospholipase B-like lamina ancestor (lama) (Drosophila melanogaster (Fruit fly)).